The sequence spans 430 residues: Zinc finger CCCH domain-containing protein 48 (430 aa).

Disordered regions lie at residues 1–27 (MDLD…TTDS) and 56–90 (GSGP…GTAN). Residues 26 to 52 (DSNQKVCFHWRAGRCNRYPCPYLHREL) form a C3H1-type 1 zinc finger. The C3H1-type 2 zinc finger occupies 102-129 (TKTEKLCKFWVDGNCPYGDKCRYLHCWS). WD repeat units follow at residues 142-183 (GHQK…GVLN), 221-258 (GPVG…SCFD), 265-304 (GHTL…QTLT), 306-342 (HTSV…NLEV), 345-389 (THKE…ERGK), and 391-429 (LAKQ…TPIL).

This is Zinc finger CCCH domain-containing protein 48 (ZFWD1) from Arabidopsis thaliana (Mouse-ear cress).